We begin with the raw amino-acid sequence, 144 residues long: Small ribosomal subunit protein uS11 (144 aa).

Positions 123–144 (EDVTPVPTDSTRRKGSRRGRRL) are disordered. Residues 135 to 144 (RKGSRRGRRL) are compositionally biased toward basic residues.

The protein belongs to the universal ribosomal protein uS11 family.

The polypeptide is Small ribosomal subunit protein uS11 (RPS14) (Trypanosoma brucei brucei).